The primary structure comprises 178 residues: Large ribosomal subunit protein uL5 (178 aa).

It belongs to the universal ribosomal protein uL5 family. As to quaternary structure, part of the 50S ribosomal subunit; part of the 5S rRNA/L5/L18/L25 subcomplex. Contacts the 5S rRNA and the P site tRNA. Forms a bridge to the 30S subunit in the 70S ribosome.

This is one of the proteins that bind and probably mediate the attachment of the 5S RNA into the large ribosomal subunit, where it forms part of the central protuberance. In the 70S ribosome it contacts protein S13 of the 30S subunit (bridge B1b), connecting the 2 subunits; this bridge is implicated in subunit movement. Contacts the P site tRNA; the 5S rRNA and some of its associated proteins might help stabilize positioning of ribosome-bound tRNAs. This is Large ribosomal subunit protein uL5 from Psychrobacter cryohalolentis (strain ATCC BAA-1226 / DSM 17306 / VKM B-2378 / K5).